Here is a 355-residue protein sequence, read N- to C-terminus: Eukaryotic initiation factor 4A-13 (355 aa).

A Q motif motif is present at residues 40-68 (DSFDAMGLQENLLRGIYAYGFEKPSAIQQ). One can recognise a Helicase ATP-binding domain in the interval 71 to 241 (IVPFCKGLDV…RKFMNQPVRI (171 aa)). 84 to 91 (AQSGTGKT) provides a ligand contact to ATP. The DEAD box motif lies at 189-192 (DEAD). The 104-residue stretch at 252–355 (GIKQFYVNVD…QQVSLVINYD (104 aa)) folds into the Helicase C-terminal domain.

Belongs to the DEAD box helicase family. eIF4A subfamily. EIF4F is a multi-subunit complex, the composition of which varies with external and internal environmental conditions. It is composed of at least EIF4A, EIF4E and EIF4G.

The catalysed reaction is ATP + H2O = ADP + phosphate + H(+). ATP-dependent RNA helicase which is a subunit of the eIF4F complex involved in cap recognition and is required for mRNA binding to ribosome. In the current model of translation initiation, eIF4A unwinds RNA secondary structures in the 5'-UTR of mRNAs which is necessary to allow efficient binding of the small ribosomal subunit, and subsequent scanning for the initiator codon. The polypeptide is Eukaryotic initiation factor 4A-13 (Nicotiana tabacum (Common tobacco)).